The sequence spans 414 residues: Phosphoglycerate kinase (414 aa).

Residues 19–21, R34, 57–60, R114, and R154 each bind substrate; these read DLN and HQSK. Residues E332 and 358–361 contribute to the ATP site; that span reads GGHS.

The protein belongs to the phosphoglycerate kinase family. As to quaternary structure, monomer.

Its subcellular location is the cytoplasm. The enzyme catalyses (2R)-3-phosphoglycerate + ATP = (2R)-3-phospho-glyceroyl phosphate + ADP. It functions in the pathway carbohydrate degradation; glycolysis; pyruvate from D-glyceraldehyde 3-phosphate: step 2/5. This chain is Phosphoglycerate kinase, found in Thermococcus onnurineus (strain NA1).